The primary structure comprises 237 residues: F-box only protein 50 (237 aa).

The region spanning 31 to 231 (VFETKPFERN…VTDSSVIVKA (201 aa)) is the FBA domain. Residues 40-82 (NLLQNPSPYGVNHTVPPPEPHRSGIPPPSDRPPQLEPEGNFSG) are disordered. Residues 64–74 (IPPPSDRPPQL) show a composition bias toward pro residues.

In terms of tissue distribution, expressed in nonspecific cytotoxic cells (NCC).

It localises to the cytoplasm. May promote cell proliferation. The polypeptide is F-box only protein 50 (nccrp1) (Danio rerio (Zebrafish)).